Here is a 164-residue protein sequence, read N- to C-terminus: Transcription elongation factor GreA (164 aa).

Residues 12–38 (RRLERELERLKKERPGVILAIKEAREE) adopt a coiled-coil conformation.

The protein belongs to the GreA/GreB family.

Necessary for efficient RNA polymerase transcription elongation past template-encoded arresting sites. The arresting sites in DNA have the property of trapping a certain fraction of elongating RNA polymerases that pass through, resulting in locked ternary complexes. Cleavage of the nascent transcript by cleavage factors such as GreA or GreB allows the resumption of elongation from the new 3'terminus. GreA releases sequences of 2 to 3 nucleotides. The chain is Transcription elongation factor GreA from Solidesulfovibrio magneticus (strain ATCC 700980 / DSM 13731 / RS-1) (Desulfovibrio magneticus).